The chain runs to 266 residues: Thymidylate synthase (266 aa).

DUMP is bound at residue Arg24. His54 contacts (6R)-5,10-methylene-5,6,7,8-tetrahydrofolate. Position 129–130 (129–130 (RR)) interacts with dUMP. The active-site Nucleophile is the Cys149. DUMP contacts are provided by residues 169 to 172 (RSAD), Asn180, and 210 to 212 (HIY). Asp172 serves as a coordination point for (6R)-5,10-methylene-5,6,7,8-tetrahydrofolate. Residue Ala265 coordinates (6R)-5,10-methylene-5,6,7,8-tetrahydrofolate.

This sequence belongs to the thymidylate synthase family. Bacterial-type ThyA subfamily. In terms of assembly, homodimer.

It is found in the cytoplasm. It catalyses the reaction dUMP + (6R)-5,10-methylene-5,6,7,8-tetrahydrofolate = 7,8-dihydrofolate + dTMP. It functions in the pathway pyrimidine metabolism; dTTP biosynthesis. Functionally, catalyzes the reductive methylation of 2'-deoxyuridine-5'-monophosphate (dUMP) to 2'-deoxythymidine-5'-monophosphate (dTMP) while utilizing 5,10-methylenetetrahydrofolate (mTHF) as the methyl donor and reductant in the reaction, yielding dihydrofolate (DHF) as a by-product. This enzymatic reaction provides an intracellular de novo source of dTMP, an essential precursor for DNA biosynthesis. The polypeptide is Thymidylate synthase (Nocardia farcinica (strain IFM 10152)).